The primary structure comprises 73 residues: Long neurotoxin 2 (73 aa).

5 disulfides stabilise this stretch: Cys3–Cys21, Cys14–Cys42, Cys27–Cys31, Cys46–Cys57, and Cys58–Cys63.

The protein belongs to the three-finger toxin family. Long-chain subfamily. Type II alpha-neurotoxin sub-subfamily. In terms of tissue distribution, expressed by the venom gland.

The protein localises to the secreted. In terms of biological role, binds with high affinity to muscular (alpha-1/CHRNA1) and neuronal (alpha-7/CHRNA7) nicotinic acetylcholine receptor (nAChR) and inhibits acetylcholine from binding to the receptor, thereby impairing neuromuscular and neuronal transmission. The sequence is that of Long neurotoxin 2 from Ophiophagus hannah (King cobra).